Reading from the N-terminus, the 123-residue chain is Putative EG45-like domain containing protein 1 (123 aa).

The signal sequence occupies residues 1 to 21 (MSKSIVFFSTVLVFLFSFSYA). An Expansin-like EG45 domain is found at 24-123 (GIATFYTSYT…AGIINIDYFP (100 aa)).

It localises to the secreted. Its function is as follows. Might have a systemic role in water and solute homeostasis. The protein is Putative EG45-like domain containing protein 1 (EGC1) of Arabidopsis thaliana (Mouse-ear cress).